Here is a 388-residue protein sequence, read N- to C-terminus: Succinate--CoA ligase [ADP-forming] subunit beta (388 aa).

In terms of domain architecture, ATP-grasp spans 9–244 (KQLFARYGMP…KSQEDEREAQ (236 aa)). ATP is bound by residues Lys46, 53-55 (GRG), Glu99, Thr102, and Glu107. The Mg(2+) site is built by Asn199 and Asp213. Substrate is bound by residues Asn264 and 321–323 (GIV).

Belongs to the succinate/malate CoA ligase beta subunit family. As to quaternary structure, heterotetramer of two alpha and two beta subunits. It depends on Mg(2+) as a cofactor.

The enzyme catalyses succinate + ATP + CoA = succinyl-CoA + ADP + phosphate. The catalysed reaction is GTP + succinate + CoA = succinyl-CoA + GDP + phosphate. It participates in carbohydrate metabolism; tricarboxylic acid cycle; succinate from succinyl-CoA (ligase route): step 1/1. In terms of biological role, succinyl-CoA synthetase functions in the citric acid cycle (TCA), coupling the hydrolysis of succinyl-CoA to the synthesis of either ATP or GTP and thus represents the only step of substrate-level phosphorylation in the TCA. The beta subunit provides nucleotide specificity of the enzyme and binds the substrate succinate, while the binding sites for coenzyme A and phosphate are found in the alpha subunit. In Yersinia enterocolitica serotype O:8 / biotype 1B (strain NCTC 13174 / 8081), this protein is Succinate--CoA ligase [ADP-forming] subunit beta.